A 130-amino-acid polypeptide reads, in one-letter code: Fumarate reductase subunit D (130 aa).

3 helical membrane-spanning segments follow: residues 35–55, 67–87, and 110–130; these read FAMITPITVLVLGILAPLGVI, SFATSIIGALFIIGTLALPMW, and IACYGFATIISALAVVFIFMI.

This sequence belongs to the FrdD family. In terms of assembly, part of an enzyme complex containing four subunits: a flavoprotein (FrdA), an iron-sulfur protein (FrdB), and two hydrophobic anchor proteins (FrdC and FrdD).

Its subcellular location is the cell inner membrane. In terms of biological role, anchors the catalytic components of the fumarate reductase complex to the cell membrane, binds quinones. The sequence is that of Fumarate reductase subunit D from Vibrio cholerae serotype O1 (strain M66-2).